The following is a 145-amino-acid chain: SsrA-binding protein (145 aa).

Belongs to the SmpB family.

It is found in the cytoplasm. Its function is as follows. Required for rescue of stalled ribosomes mediated by trans-translation. Binds to transfer-messenger RNA (tmRNA), required for stable association of tmRNA with ribosomes. tmRNA and SmpB together mimic tRNA shape, replacing the anticodon stem-loop with SmpB. tmRNA is encoded by the ssrA gene; the 2 termini fold to resemble tRNA(Ala) and it encodes a 'tag peptide', a short internal open reading frame. During trans-translation Ala-aminoacylated tmRNA acts like a tRNA, entering the A-site of stalled ribosomes, displacing the stalled mRNA. The ribosome then switches to translate the ORF on the tmRNA; the nascent peptide is terminated with the 'tag peptide' encoded by the tmRNA and targeted for degradation. The ribosome is freed to recommence translation, which seems to be the essential function of trans-translation. This Mycoplasma genitalium (strain ATCC 33530 / DSM 19775 / NCTC 10195 / G37) (Mycoplasmoides genitalium) protein is SsrA-binding protein.